The chain runs to 858 residues: Selenocysteine insertion sequence-binding protein 2 (858 aa).

3 disordered regions span residues 127–261 (KPRH…GDVG), 275–296 (SDHT…CTQE), and 327–625 (LKKT…DSAT). 3 stretches are compositionally biased toward basic and acidic residues: residues 147-166 (KPSD…RRAD), 188-197 (SSLKSDGYHK), and 215-224 (PEFEFSRLDF). Polar residues-rich tracts occupy residues 281 to 296 (AVTS…CTQE) and 327 to 352 (LKKT…NPSY). The Nuclear localization signal signature appears at 380–387 (KNKKKKEK). The segment covering 418 to 429 (RRHRGQSPKLHS) has biased composition (basic residues). Residues 430-447 (KQQTQNEFKTSGKKSQVP) are compositionally biased toward polar residues. Residues 539-548 (ILKERQERMQ) are compositionally biased toward basic and acidic residues. Composition is skewed to polar residues over residues 554 to 563 (SAVSLTVASD) and 571 to 582 (GASNQTPSQDNP). Residues 678-699 (LVLGLREVLKHLKLRKLKCIII) form an RNA-binding region. Positions 785–819 (MRQEQAGEPGPQSPPSPPMQDPIPSTEEGTLPSTG) are disordered. The segment covering 795–805 (PQSPPSPPMQD) has biased composition (pro residues).

The protein resides in the cytoplasm. It is found in the nucleus. MRNA-binding protein that binds to the SECIS (selenocysteine insertion sequence) element present in the 3'-UTR of mRNAs encoding selenoproteins and facilitates the incorporation of the rare amino acid selenocysteine. Insertion of selenocysteine at UGA codons is mediated by SECISBP2 and EEFSEC: SECISBP2 (1) specifically binds the SECIS sequence once the 80S ribosome encounters an in-frame UGA codon and (2) contacts the RPS27A/eS31 of the 40S ribosome before ribosome stalling. (3) GTP-bound EEFSEC then delivers selenocysteinyl-tRNA(Sec) to the 80S ribosome and adopts a preaccommodated state conformation. (4) After GTP hydrolysis, EEFSEC dissociates from the assembly, selenocysteinyl-tRNA(Sec) accommodates, and peptide bond synthesis and selenoprotein elongation occur. This chain is Selenocysteine insertion sequence-binding protein 2, found in Mus musculus (Mouse).